The primary structure comprises 567 residues: Type II secretion system protein E (567 aa).

Position 325–332 (325–332) interacts with ATP; the sequence is GPTGSGKT.

The protein belongs to the GSP E family. As to quaternary structure, forms homooligomers; most probably hexamers. Interacts with XpsL/GspL.

It is found in the cell inner membrane. The enzyme catalyses ATP + H2O + cellular proteinSide 1 = ADP + phosphate + cellular proteinSide 2.. ATPase component of the type II secretion system required for the energy-dependent secretion of extracellular factors such as proteases and toxins from the periplasm. Acts as a molecular motor to provide the energy that is required for assembly of the pseudopilus and the extrusion of substrates generated in the cytoplasm. The sequence is that of Type II secretion system protein E (xpsE) from Xanthomonas campestris pv. campestris (strain ATCC 33913 / DSM 3586 / NCPPB 528 / LMG 568 / P 25).